Reading from the N-terminus, the 360-residue chain is Peptide chain release factor 1 (360 aa).

Gln235 bears the N5-methylglutamine mark.

Belongs to the prokaryotic/mitochondrial release factor family. Methylated by PrmC. Methylation increases the termination efficiency of RF1.

The protein resides in the cytoplasm. In terms of biological role, peptide chain release factor 1 directs the termination of translation in response to the peptide chain termination codons UAG and UAA. This chain is Peptide chain release factor 1, found in Delftia acidovorans (strain DSM 14801 / SPH-1).